We begin with the raw amino-acid sequence, 692 residues long: MGTVSSRRSWWPLPLPLLLLLLLGPAGARAQEDEDGDYEELVLALRSEEDGLADAPEHGATATFHRCAKDPWRLPGTYVVVLKEETHRSQSERTARRLQAQAARRGYLTKILHVFHHLLPGFLVKMSGDLLELALKLPHVDYIEEDSSVFAQSIPWNLERITPARYRADEYQPPKGGSLVEVYLLDTSIQSDHREIEGRVMVTDFESVPEEDGTRFHRQASKCDSHGTHLAGVVSGRDAGVAKGAGLRSLRVLNCQGKGTVSGTLIGLEFIRKSQLVQPVGPLVVLLPLAGGYSRVFNAACQRLARAGVVLVTAAGNFRDDACLYSPASAPEVITVGATNAQDQPVTLGTLGTNFGRCVDLFAPGEDIIGASSDCSTCFVSRSGTSQAAAHVAGIAAMMLSAEPELTLAELRQRLIHFSAKDVINEAWFPEDQRVLTPNLVAALPPSTHRAGWQLFCRTVWSAHSGPTRMATAVARCAQDEELLSCSSFSRSGKRRGERIEAQGGKRVCRAHNAFGGEGVYAIARCCLLPQVNCSVHTAPPAGASMGTRVHCHQQGHVLTGCSSHWEVEDLGTHKPPVLRPRGQPNQCVGHREASIHASCCHAPGLECKVKEHGIPAPQEQVIVACEDGWTLTGCSALPGTSHVLGAYAVDNTCVVRSRDVSTTGSTSEEAVAAVAICCRSRHLVQASQELQ.

The signal sequence occupies residues 1 to 30 (MGTVSSRRSWWPLPLPLLLLLLLGPAGARA). A propeptide spanning residues 31 to 152 (QEDEDGDYEE…IEEDSSVFAQ (122 aa)) is cleaved from the precursor. A Sulfotyrosine modification is found at Y38. Residue S47 is modified to Phosphoserine. The Inhibitor I9 domain maps to 77–149 (TYVVVLKEET…VDYIEEDSSV (73 aa)). Residues 155–444 (PWNLERITPA…VLTPNLVAAL (290 aa)) enclose the Peptidase S8 domain. Residues D186 and H226 each act as charge relay system in the active site. Cystine bridges form between C223/C255 and C323/C358. S386 serves as the catalytic Charge relay system. The tract at residues 450 to 692 (RAGWQLFCRT…HLVQASQELQ (243 aa)) is C-terminal domain. Cystine bridges form between C457-C527, C477-C526, and C486-C509. A glycan (N-linked (GlcNAc...) asparagine) is linked at N533. Intrachain disulfides connect C534/C601, C552/C600, C562/C588, C608/C679, C626/C678, and C635/C654. A Phosphoserine modification is found at S688.

The protein belongs to the peptidase S8 family. As to quaternary structure, monomer. Can self-associate to form dimers and higher multimers which may have increased LDLR degrading activity. The precursor protein but not the mature protein may form multimers. Interacts with APOB, VLDLR, LRP8/APOER2 and BACE1. The full-length immature form (pro-PCSK9) interacts with SCNN1A, SCNN1B and SCNN1G. The pro-PCSK9 form (via C-terminal domain) interacts with LDLR. Interacts (via the C-terminal domain) with ANXA2 (via repeat Annexin 1); the interaction inhibits the degradation of LDLR. Requires Ca(2+) as cofactor. Cleavage by furin and PCSK5 generates a truncated inactive protein that is unable to induce LDLR degradation. Post-translationally, undergoes autocatalytic cleavage in the endoplasmic reticulum to release the propeptide from the N-terminus and the cleavage of the propeptide is strictly required for its maturation and activation. The cleaved propeptide however remains associated with the catalytic domain through non-covalent interactions, preventing potential substrates from accessing its active site. As a result, it is secreted from cells as a propeptide-containing, enzymatically inactive protein. In terms of processing, phosphorylation protects the propeptide against proteolysis.

Its subcellular location is the cytoplasm. It localises to the secreted. It is found in the endosome. The protein resides in the lysosome. The protein localises to the cell surface. Its subcellular location is the endoplasmic reticulum. It localises to the golgi apparatus. Its activity is regulated as follows. Its proteolytic activity is autoinhibited by the non-covalent binding of the propeptide to the catalytic domain. Inhibited by EGTA. Functionally, crucial player in the regulation of plasma cholesterol homeostasis. Binds to low-density lipid receptor family members: low density lipoprotein receptor (LDLR), very low density lipoprotein receptor (VLDLR), apolipoprotein E receptor (LRP1/APOER) and apolipoprotein receptor 2 (LRP8/APOER2), and promotes their degradation in intracellular acidic compartments. Acts via a non-proteolytic mechanism to enhance the degradation of the hepatic LDLR through a clathrin LDLRAP1/ARH-mediated pathway. May prevent the recycling of LDLR from endosomes to the cell surface or direct it to lysosomes for degradation. Can induce ubiquitination of LDLR leading to its subsequent degradation. Inhibits intracellular degradation of APOB via the autophagosome/lysosome pathway in a LDLR-independent manner. Involved in the disposal of non-acetylated intermediates of BACE1 in the early secretory pathway. Inhibits epithelial Na(+) channel (ENaC)-mediated Na(+) absorption by reducing ENaC surface expression primarily by increasing its proteasomal degradation. Regulates neuronal apoptosis via modulation of LRP8/APOER2 levels and related anti-apoptotic signaling pathways. In Macaca nemestrina (Pig-tailed macaque), this protein is Proprotein convertase subtilisin/kexin type 9 (PCSK9).